The chain runs to 274 residues: Large ribosomal subunit protein uL2 (274 aa).

Disordered regions lie at residues 28 to 54 (APHA…TRHI) and 224 to 274 (VAMN…RRRK). A compositionally biased stretch (basic and acidic residues) spans 263 to 274 (KRTDKMIVRRRK).

It belongs to the universal ribosomal protein uL2 family. As to quaternary structure, part of the 50S ribosomal subunit. Forms a bridge to the 30S subunit in the 70S ribosome.

In terms of biological role, one of the primary rRNA binding proteins. Required for association of the 30S and 50S subunits to form the 70S ribosome, for tRNA binding and peptide bond formation. It has been suggested to have peptidyltransferase activity; this is somewhat controversial. Makes several contacts with the 16S rRNA in the 70S ribosome. The sequence is that of Large ribosomal subunit protein uL2 from Pseudomonas fluorescens (strain SBW25).